The following is a 356-amino-acid chain: Solute carrier family 25 member 3 (356 aa).

Residues 1 to 44 (MFSSVAHLARANPFNAPHLQLVHDVSGPRSPPGPPRRSRHLAAA) constitute a mitochondrion transit peptide. Residues 45–57 (AVEGYSCEFGSMK) are Mitochondrial intermembrane-facing. Solcar repeat units lie at residues 57–141 (KYYA…FKAL), 154–238 (WRTS…TVEA), and 255–333 (EQLV…VKVY). A helical membrane pass occupies residues 58–80 (YYALCGFGGVLSCGLTHTAVVPL). The Mitochondrial matrix portion of the chain corresponds to 81 to 115 (DLVKCRMQVDPQKYKGIFNGFSITLKEDGVRGLAK). At lysine 93 the chain carries N6-acetyllysine. Lysine 106 carries the post-translational modification N6-methyllysine. A helical transmembrane segment spans residues 116–135 (GWAPTLIGYSMQGLCKFGFY). At 136–155 (EVFKALYSNILGEENTYLWR) the chain is on the mitochondrial intermembrane side. The helical transmembrane segment at 156 to 177 (TSLYLAASASAEFFADIALAPM) threads the bilayer. Over 178–212 (EAAKVRIQTQPGYANTLREAVPKMYKEEGLNAFYK) the chain is Mitochondrial matrix. Tyrosine 190 carries the post-translational modification Phosphotyrosine. Residue lysine 203 is modified to N6-acetyllysine. The chain crosses the membrane as a helical span at residues 213–232 (GVAPVWMRQIPYTMMKFACF). Over 233–255 (ERTVEALYKFVVPKPRSECTKAE) the chain is Mitochondrial intermembrane. Residues 256–278 (QLVVTFVAGYIAGVFCAIVSHPA) form a helical membrane-spanning segment. At 279–308 (DSVVSVLNKEKGSTASQVLQRLGFRGVWKG) the chain is on the mitochondrial matrix side. The chain crosses the membrane as a helical span at residues 309 to 327 (LFARIIMIGTLTALQWFIY). The Mitochondrial intermembrane portion of the chain corresponds to 328 to 356 (DSVKVYFRLPRPPPPEMPESLKKKLGLTE).

Belongs to the mitochondrial carrier (TC 2.A.29) family. In terms of assembly, interacts with PPIF; the interaction is impaired by CsA.

It localises to the mitochondrion inner membrane. It catalyses the reaction phosphate(in) + H(+)(in) = phosphate(out) + H(+)(out). In terms of biological role, inorganic ion transporter that transports phosphate or copper ions across the mitochondrial inner membrane into the matrix compartment. Mediates proton-coupled symport of phosphate ions necessary for mitochondrial oxidative phosphorylation of ADP to ATP. Transports copper ions probably in the form of anionic copper(I) complexes to maintain mitochondrial matrix copper pool and to supply copper for cytochrome C oxidase complex assembly. May also play a role in regulation of the mitochondrial permeability transition pore (mPTP). The chain is Solute carrier family 25 member 3 from Rattus norvegicus (Rat).